We begin with the raw amino-acid sequence, 304 residues long: Dihydroorotate dehydrogenase B (NAD(+)), catalytic subunit (304 aa).

FMN contacts are provided by residues Ser21 and 45 to 46; that span reads KA. Substrate-binding positions include Lys45 and 69 to 73; that span reads NAIGL. The FMN site is built by Asn99 and Asn127. A substrate-binding site is contributed by Asn127. Cys130 (nucleophile) is an active-site residue. Residues Lys165 and Ile191 each contribute to the FMN site. 192–193 contributes to the substrate binding site; sequence NT. FMN contacts are provided by residues Gly217, 243 to 244, and 265 to 266; these read GG and GT.

It belongs to the dihydroorotate dehydrogenase family. Type 1 subfamily. In terms of assembly, heterotetramer of 2 PyrK and 2 PyrD type B subunits. It depends on FMN as a cofactor.

It is found in the cytoplasm. It carries out the reaction (S)-dihydroorotate + NAD(+) = orotate + NADH + H(+). It functions in the pathway pyrimidine metabolism; UMP biosynthesis via de novo pathway; orotate from (S)-dihydroorotate (NAD(+) route): step 1/1. In terms of biological role, catalyzes the conversion of dihydroorotate to orotate with NAD(+) as electron acceptor. This is Dihydroorotate dehydrogenase B (NAD(+)), catalytic subunit (pyrD) from Listeria innocua serovar 6a (strain ATCC BAA-680 / CLIP 11262).